The primary structure comprises 469 residues: UDP-N-acetylmuramate--L-alanine ligase (469 aa).

Glycine 113–threonine 119 provides a ligand contact to ATP.

It belongs to the MurCDEF family.

It localises to the cytoplasm. The catalysed reaction is UDP-N-acetyl-alpha-D-muramate + L-alanine + ATP = UDP-N-acetyl-alpha-D-muramoyl-L-alanine + ADP + phosphate + H(+). The protein operates within cell wall biogenesis; peptidoglycan biosynthesis. Cell wall formation. This is UDP-N-acetylmuramate--L-alanine ligase from Neisseria gonorrhoeae (strain ATCC 700825 / FA 1090).